An 82-amino-acid chain; its full sequence is Probable glutamyl-tRNA(Gln) amidotransferase subunit C (82 aa).

Belongs to the GatC family. Heterotrimer of A, B and C subunits.

It catalyses the reaction L-glutamyl-tRNA(Gln) + L-glutamine + ATP + H2O = L-glutaminyl-tRNA(Gln) + L-glutamate + ADP + phosphate + H(+). The catalysed reaction is L-aspartyl-tRNA(Asn) + L-glutamine + ATP + H2O = L-asparaginyl-tRNA(Asn) + L-glutamate + ADP + phosphate + 2 H(+). Its function is as follows. Allows the formation of correctly charged Asn-tRNA(Asn) or Gln-tRNA(Gln) through the transamidation of misacylated Asp-tRNA(Asn) or Glu-tRNA(Gln) in organisms which lack either or both of asparaginyl-tRNA or glutaminyl-tRNA synthetases. The reaction takes place in the presence of glutamine and ATP through an activated phospho-Asp-tRNA(Asn) or phospho-Glu-tRNA(Gln). The polypeptide is Probable glutamyl-tRNA(Gln) amidotransferase subunit C (Methanocaldococcus jannaschii (strain ATCC 43067 / DSM 2661 / JAL-1 / JCM 10045 / NBRC 100440) (Methanococcus jannaschii)).